A 468-amino-acid chain; its full sequence is Glucose transport protein (468 aa).

Over 1-17 (MNPSSSPSQSTANVKFV) the chain is Cytoplasmic. A helical membrane pass occupies residues 18–38 (LLISGVAALGGFLFGFDTAVI). Residues 39 to 58 (NGAVAALQKHFQTDSLLTGL) are Extracellular-facing. Residues 59 to 78 (SVSLALLGSALGAFGAGPIA) traverse the membrane as a helical segment. At 79–84 (DRHGRI) the chain is on the cytoplasmic side. A helical transmembrane segment spans residues 85 to 105 (KTMILAAVLFTLSSIGSGLPF). Residues 106-114 (TIWDFIFWR) lie on the Extracellular side of the membrane. Residues 115-135 (VLGGIGVGAASVIAPAYIAEV) traverse the membrane as a helical segment. Topologically, residues 136–149 (SPAHLRGRLGSLQQ) are cytoplasmic. Residues 150–170 (LAIVSGIFIALLSNWFIALMA) form a helical membrane-spanning segment. The Extracellular segment spans residues 171-186 (GGSAQNPWLFGAAAWR). Residues 187–207 (WMFWTELIPALLYGVCAFLIP) traverse the membrane as a helical segment. Topologically, residues 208–265 (ESPRYLVAQGQGEKAAAILWKVEGGDVPSRIEEIQATVSLDHKPRFSDLLSRRGGLLP) are cytoplasmic. Residues 266–286 (IVWIGMGLSALQQFVGINVIF) traverse the membrane as a helical segment. Over 287–307 (YYSSVLWRSVGFTEEKSLLIT) the chain is Extracellular. The helical transmembrane segment at 308 to 328 (VITGFINILTTLVAIAFVDKF) threads the bilayer. The Cytoplasmic segment spans residues 329–331 (GRK). A helical membrane pass occupies residues 332–352 (PLLLMGSIGMTITLGILSVVF). Residues 353–366 (GGATVVNGQPTLTG) lie on the Extracellular side of the membrane. A helical transmembrane segment spans residues 367 to 387 (AAGIIALVTANLYVFSFGFSW). The Cytoplasmic portion of the chain corresponds to 388–412 (GPIVWVLLGEMFNNKIRAAALSVAA). The chain crosses the membrane as a helical span at residues 413 to 433 (GVQWIANFIISTTFPPLLDTV). Over 434–436 (GLG) the chain is Extracellular. A helical transmembrane segment spans residues 437-457 (PAYGLYATSAAISIFFIWFFV). Residues 458–468 (KETKGKTLEQM) are Cytoplasmic-facing.

Belongs to the major facilitator superfamily. Sugar transporter (TC 2.A.1.1) family.

The protein resides in the cell membrane. The protein is Glucose transport protein (gtr) of Synechocystis sp. (strain ATCC 27184 / PCC 6803 / Kazusa).